Reading from the N-terminus, the 347-residue chain is uncharacterized protein (347 aa).

The N-terminal stretch at 1-21 (MRYRIFLLFFFALLPTSLVWA) is a signal peptide.

This is an uncharacterized protein from Escherichia coli (strain K12).